We begin with the raw amino-acid sequence, 4910 residues long: Midasin (4910 aa).

AAA-ATPase protomer regions lie at residues 305 to 528 and 636 to 975; these read IQNS…DILF and MEQI…TDII. ATP contacts are provided by residues 315 to 322 and 653 to 660; these read GKAGSGKT and GETGTGKT. The interval 695-803 is interaction with RIX1; sequence VNSKTVAVPI…KKFEAQSSSI (109 aa). Residue T1026 is modified to Phosphothreonine. 4 AAA-ATPase protomer regions span residues 1054-1280, 1345-1624, 1732-1985, and 2036-2286; these read HYII…WALR, KGMR…VEFI, RVVR…QLLI, and VYES…DELH. ATP is bound by residues 1083 to 1090, 1368 to 1375, 1747 to 1754, and 2054 to 2061; these read GPTSSGKT, GETGCGKT, GSPGVGKT, and GPSNSGKT. Residues 2372–4075 form a linker region; it reads EVGKWANNVL…DGEGAQNNNK (1704 aa). Residue S2971 is modified to Phosphoserine. Disordered stretches follow at residues 4045-4547, 4555-4574, and 4579-4600; these read SPQP…EKMD, SDID…SGFI, and SEED…EDDS. Over residues 4078–4088 the composition is skewed to acidic residues; sequence EQDEDLTEDAQ. Over residues 4089-4098 the composition is skewed to basic and acidic residues; that stretch reads NENKEQQDKD. Over residues 4099 to 4154 the composition is skewed to acidic residues; the sequence is ERDDENEDDAVEMEGDMAGELEDLSNGEENDDEDTDSEEEELDEEIDDLNEDDPNA. Residues 4155–4174 are compositionally biased toward basic and acidic residues; the sequence is IDDKMWDDKASDNSKEKDTD. 3 stretches are compositionally biased toward acidic residues: residues 4202-4244, 4251-4274, and 4288-4358; these read GDED…EDLE, ETLD…DVDM, and GNED…EEEL. Position 4353 is a phosphoserine (S4353). Over residues 4359 to 4372 the composition is skewed to basic and acidic residues; it reads KQDAAMEENKEKGG. At T4388 the chain carries Phosphothreonine. Basic and acidic residues-rich tracts occupy residues 4435 to 4447 and 4481 to 4495; these read DVTK…REEA and LEKN…EHVE. Residues 4498 to 4516 are compositionally biased toward polar residues; it reads NTETDTQALGSATQDQLQT. The span at 4517–4531 shows a compositional bias: acidic residues; it reads IDEDMAIDDDREEQE. S4555 bears the Phosphoserine mark. The segment covering 4557–4570 has biased composition (basic and acidic residues); the sequence is IDAHDANNDVDSKK. Residues 4704-4899 form the VWFA domain; that stretch reads QIMIALDDSK…SELPEMLSLI (196 aa).

This sequence belongs to the midasin family. In terms of assembly, associates with pre-60S ribosomes in the nucleoplasm. Interacts (via its hexameric AAA ATPase ring) with the RIX1 complex (via RIX1); this interaction is crucial for recruitment of MDN1 to the pre-ribosomal particle. Interacts (via VWFA/MIDAS domain) with YTM1 (via UBL domain). Interacts (via VWFA/MIDAS domain) with RSA4 (via UBL domain).

Its subcellular location is the nucleus. It is found in the nucleolus. The protein localises to the nucleoplasm. Functionally, nuclear chaperone required for maturation and nuclear export of pre-60S ribosome subunits. Functions at successive maturation steps to remove ribosomal factors at critical transition points, first driving the exit of early pre-60S particles from the nucleolus and then driving late pre-60S particles from the nucleus. At an early stage in 60S maturation, mediates the dissociation of the NOP7 complex (YTM1-ERB1-NOP7) from early pre-60S particles, rendering them competent for export from the nucleolus to the nucleoplasm. Subsequently recruited to the nucleoplasmic particles through interaction with the RIX1 complex. This binding is only possible if the 5S RNP at the central protuberance has undergone the rotation to complete its maturation. After remodeling, removes the ribosome biogenesis factor RSA4 in an ATP hydrolysis-driven step from pre-60S ribosomal subunits, rendering them competent for export from the nucleoplasm to the cytoplasm. Activates the GTPase activity of NOG2, which disengages from the pre-60S particle upon GTP hydrolysis, thus freeing its binding site for the nuclear export factor NMD3. The sequence is that of Midasin (MDN1) from Saccharomyces cerevisiae (strain ATCC 204508 / S288c) (Baker's yeast).